Consider the following 742-residue polypeptide: Envelope glycoprotein H (742 aa).

The first 23 residues, 1–23 (MRPGLPSYLIILAVCLFSHLLSS), serve as a signal peptide directing secretion. Residues 24-719 (RYGAEAVSEP…VVDATDSRLL (696 aa)) lie on the Virion surface side of the membrane. N-linked (GlcNAc...) asparagine; by host glycosylation is found at asparagine 55, asparagine 62, asparagine 67, and asparagine 192. A disulfide bond links cysteine 195 and cysteine 211. Residues 217–280 (YLIDELRYVK…QTEKHELLVL (64 aa)) are interaction with gL. 3 disulfides stabilise this stretch: cysteine 330–cysteine 383, cysteine 495–cysteine 522, and cysteine 571–cysteine 624. N-linked (GlcNAc...) asparagine; by host glycosylation is found at asparagine 641 and asparagine 700. A helical transmembrane segment spans residues 720–740 (MMSVYALSAIIGIYLLYRMLK). Topologically, residues 741–742 (TC) are intravirion.

This sequence belongs to the herpesviridae glycoprotein H family. In terms of assembly, interacts with glycoprotein L (gL); this interaction is necessary for the correct processing and cell surface expression of gH. The heterodimer gH/gL seems to interact with gB trimers during fusion. Forms the envelope pentamer complex (PC) composed of gH, gL, UL128, UL130, and UL131A. The pentamer interacts with host NRP2. Forms the envelope trimer complex composed of gH, gL, and gO. The trimer interacts with host PDGFRA. The trimer also interacts with host EPHA2. The trimer also interacts with host TGFBR3. Interacts with UL116. N-glycosylated, O-glycosylated, and sialylated.

It is found in the virion membrane. The protein resides in the host cell membrane. It localises to the host endosome membrane. The heterodimer glycoprotein H-glycoprotein L is required for the fusion of viral and plasma membranes leading to virus entry into the host cell. Following initial binding to host receptor, membrane fusion is mediated by the fusion machinery composed of gB and the heterodimer gH/gL. May also be involved in the fusion between the virion envelope and the outer nuclear membrane during virion morphogenesis. In human cytomegalovirus, forms two distincts complexes to mediate viral entry, a trimer and a pentamer at the surface of the virion envelope. The gH-gL-gO trimer is required for infection in fibroblasts by interacting with host PDGFRA, and in glioblastoma cells by interacting with host EPHA2. Thsi trimer may also be required in other cell types using host TGFBR3. The gH-gL-UL128-UL130-UL131A pentamer is essential for viral entry in epithelial, endothelial and myeloid cells via interaction with host NRP2. This Human cytomegalovirus (strain Merlin) (HHV-5) protein is Envelope glycoprotein H.